Here is a 193-residue protein sequence, read N- to C-terminus: Glycerol-3-phosphate acyltransferase (193 aa).

Helical transmembrane passes span 2-22 (AFIISIIIAYLLGSLSFAVIV), 51-71 (QAAFYVLLGDAAKGLIAVLIA), 78-98 (GVSLAFVGLVAVLGHLFPVYF), 112-132 (VLLGLSFWIGLFVIATWVIVV), and 154-174 (IIAGRTDYLFPVLIIAILIIW).

Belongs to the PlsY family. Probably interacts with PlsX.

The protein localises to the cell inner membrane. It catalyses the reaction an acyl phosphate + sn-glycerol 3-phosphate = a 1-acyl-sn-glycero-3-phosphate + phosphate. The protein operates within lipid metabolism; phospholipid metabolism. Catalyzes the transfer of an acyl group from acyl-phosphate (acyl-PO(4)) to glycerol-3-phosphate (G3P) to form lysophosphatidic acid (LPA). This enzyme utilizes acyl-phosphate as fatty acyl donor, but not acyl-CoA or acyl-ACP. The polypeptide is Glycerol-3-phosphate acyltransferase (Coxiella burnetii (strain CbuK_Q154) (Coxiella burnetii (strain Q154))).